The following is an 85-amino-acid chain: Large ribosomal subunit protein bL27 (85 aa).

Belongs to the bacterial ribosomal protein bL27 family.

The sequence is that of Large ribosomal subunit protein bL27 from Sodalis glossinidius (strain morsitans).